The sequence spans 701 residues: Phytyl ester synthase 2, chloroplastic (701 aa).

A chloroplast-targeting transit peptide spans Met1–Val65. The disordered stretch occupies residues Ser37–Thr64.

Belongs to the diacylglycerol acyltransferase family.

The protein localises to the plastid. Its subcellular location is the chloroplast. It is found in the plastoglobule. The enzyme catalyses a 1,2-diacyl-3-O-(beta-D-galactosyl)-sn-glycerol + a 1,2-diacylglycerol = an acyl-3-O-(beta-D-galactosyl)-sn-glycerol + a triacylglycerol. It catalyses the reaction a 1,2-diacylglycerol + a fatty acyl-CoA = a triacylglycerol + CoA. It carries out the reaction a fatty acyl-[ACP] + a 1,2-diacylglycerol = a triacylglycerol + holo-[ACP]. The catalysed reaction is phytol + a fatty acyl-CoA = a fatty acid phytyl ester + CoA. The enzyme catalyses phytol + tetradecanoyl-CoA = tetradecanoate phytyl ester + CoA. It catalyses the reaction a 1,3-diacylglycerol + a fatty acyl-CoA = a triacylglycerol + CoA. It carries out the reaction 1,2-dihexanoylglycerol + tetradecanoyl-CoA = 1,2-dihexanoyl-3-tetradecanoylglycerol + CoA. The catalysed reaction is 1,2-dihexanoylglycerol + hexadecanoyl-CoA = 1,2-dihexanoyl-3-hexadecanoylglycerol + CoA. The enzyme catalyses 1,2-dihexanoylglycerol + octadecanoyl-CoA = 1,2-dihexanoyl-3-octadecanoylglycerol + CoA. It catalyses the reaction (7Z,10Z,13Z)-hexadecatrienoyl-CoA + 1,2-dihexanoylglycerol = 1,2-dihexanoyl-3-(7Z,10Z,13Z-hexadecatrienoyl)-glycerol + CoA. It carries out the reaction 1,2-dihexanoylglycerol + (9Z)-octadecenoyl-CoA = 1,2-dihexanoyl-3-(9Z-octadecenoyl)-glycerol + CoA. The catalysed reaction is 1,2-dihexanoylglycerol + (9Z,12Z,15Z)-octadecatrienoyl-CoA = 1,2-dihexanoyl-3-(9Z,12Z,15Z-octadecatrienoyl)-glycerol + CoA. The enzyme catalyses phytol + decanoyl-CoA = decanoate phytyl ester + CoA. It catalyses the reaction (7Z,10Z,13Z)-hexadecatrienoyl-CoA + phytol = (7Z,10Z,13Z)-hexadecatrienoate phytyl ester + CoA. It carries out the reaction phytol + dodecanoyl-CoA = dodecanoate phytyl ester + CoA. Acyltransferase involved in fatty acid phytyl ester synthesis in chloroplasts, a process required for the maintenance of the photosynthetic membrane integrity during abiotic stress and senescence. Exhibits phytyl ester synthesis and diacylglycerol acyltransferase activities with broad substrate specificities, and can employ acyl-CoAs, acyl carrier proteins, and galactolipids as acyl donors. In Arabidopsis thaliana (Mouse-ear cress), this protein is Phytyl ester synthase 2, chloroplastic.